A 293-amino-acid chain; its full sequence is Ribosomal protein L11 methyltransferase (293 aa).

Residues Thr-145, Gly-166, Asp-188, and Asn-230 each coordinate S-adenosyl-L-methionine.

This sequence belongs to the methyltransferase superfamily. PrmA family.

Its subcellular location is the cytoplasm. The catalysed reaction is L-lysyl-[protein] + 3 S-adenosyl-L-methionine = N(6),N(6),N(6)-trimethyl-L-lysyl-[protein] + 3 S-adenosyl-L-homocysteine + 3 H(+). Its function is as follows. Methylates ribosomal protein L11. The protein is Ribosomal protein L11 methyltransferase of Shewanella baltica (strain OS195).